The primary structure comprises 359 residues: Peptide chain release factor 1 (359 aa).

Gln236 bears the N5-methylglutamine mark.

The protein belongs to the prokaryotic/mitochondrial release factor family. In terms of processing, methylated by PrmC. Methylation increases the termination efficiency of RF1.

The protein resides in the cytoplasm. Functionally, peptide chain release factor 1 directs the termination of translation in response to the peptide chain termination codons UAG and UAA. This is Peptide chain release factor 1 from Malacoplasma penetrans (strain HF-2) (Mycoplasma penetrans).